Consider the following 377-residue polypeptide: Gap junction gamma-1 protein (377 aa).

Topologically, residues 1–18 are cytoplasmic; sequence MSWSFLTRLLEEINNHST. Residues 19–39 form a helical membrane-spanning segment; it reads FVGKIWLTVLIIFRIVLTAVG. The Extracellular segment spans residues 40 to 75; it reads GESIYYDEQSKFTCNTHQPGCENVCYDAFAPLSHVR. A helical membrane pass occupies residues 76-96; that stretch reads FWVFQIILITTPSIMYLGFAM. Residues 97–174 are Cytoplasmic-facing; sequence HRIARQPDEQ…RRIKQDGLMK (78 aa). The interval 129-163 is disordered; sequence DYEEAEDNQEEDPMICEEEEPEKDSEKGDKKKHDG. A compositionally biased stretch (acidic residues) spans 131–151; the sequence is EEAEDNQEEDPMICEEEEPEK. The chain crosses the membrane as a helical span at residues 175 to 197; it reads VYVLQLLFRSVFEVGFLMGQYVL. The Extracellular portion of the chain corresponds to 198–228; that stretch reads YGFEVIPFFVCSRNPCPHTVDCFVSRPTEKT. Residues 229–249 form a helical membrane-spanning segment; sequence IFLLIMYAVSALCLFLNLCEL. Topologically, residues 250–377 are cytoplasmic; that stretch reads FHLGIGGIRD…GVGSREKSGL (128 aa). 2 disordered regions span residues 266–286 and 341–377; these read KEIQESRKKKPSAPPNYHSVL and AHASRSSSPEANSIAAEQNRLNLAQEKGVGSREKSGL. Over residues 344–362 the composition is skewed to polar residues; the sequence is SRSSSPEANSIAAEQNRLN.

The protein belongs to the connexin family. Gamma-type subfamily. As to quaternary structure, a connexon is composed of a hexamer of connexins.

The protein resides in the cell membrane. It localises to the cell junction. It is found in the gap junction. One gap junction consists of a cluster of closely packed pairs of transmembrane channels, the connexons, through which materials of low MW diffuse from one cell to a neighboring cell. The protein is Gap junction gamma-1 protein (gjc1) of Xenopus laevis (African clawed frog).